A 423-amino-acid chain; its full sequence is Putative competence-damage inducible protein (423 aa).

Belongs to the CinA family.

This chain is Putative competence-damage inducible protein, found in Streptococcus equi subsp. zooepidemicus (strain H70).